A 119-amino-acid chain; its full sequence is MTSTKNLAKAIVILYAICFFTNSDGRPMMKRSVSEMQLMHNLGEHRHTVERQDWLQMKLQDVHSALEDARTQRPRNKEDIVLGEIRNRRLLPEHLRAAVQKKSIDLDKAYMNVLFKTKP.

The N-terminal stretch at 1 to 25 (MTSTKNLAKAIVILYAICFFTNSDG) is a signal peptide. Positions 26–31 (RPMMKR) are excised as a propeptide.

It belongs to the parathyroid hormone family. As to quaternary structure, interacts with PTH1R (via N-terminal extracellular domain).

It is found in the secreted. Parathyroid hormone elevates calcium level by dissolving the salts in bone and preventing their renal excretion. Acts by binding to its receptor, PTH1R, activating G protein-coupled receptor signaling. Stimulates [1-14C]-2-deoxy-D-glucose (2DG) transport and glycogen synthesis in osteoblastic cells. This Gallus gallus (Chicken) protein is Parathyroid hormone.